A 214-amino-acid chain; its full sequence is Thymidylate kinase (214 aa).

7-14 (GVDGAGKR) provides a ligand contact to ATP. Residues D9, Y39, F70, R74, R95, N100, and Y103 each contribute to the dTMP site. D9 lines the Mg(2+) pocket. Residues 147–159 (GERSRGRAQRDPG) are LID. Residues D163 and Y165 each contribute to the dTMP site. Mg(2+) is bound at residue E166.

The protein belongs to the thymidylate kinase family. In terms of assembly, homodimer. Mg(2+) is required as a cofactor.

It catalyses the reaction dTMP + ATP = dTDP + ADP. It functions in the pathway pyrimidine metabolism; dTTP biosynthesis. In terms of biological role, catalyzes the reversible phosphorylation of deoxythymidine monophosphate (dTMP) to deoxythymidine diphosphate (dTDP), using ATP as its preferred phosphoryl donor. Situated at the junction of both de novo and salvage pathways of deoxythymidine triphosphate (dTTP) synthesis, is essential for DNA synthesis and cellular growth. The chain is Thymidylate kinase (tmk) from Mycobacterium tuberculosis (strain CDC 1551 / Oshkosh).